The following is a 248-amino-acid chain: Ribosomal RNA small subunit methyltransferase G (248 aa).

Residues G85, F90, 108 to 110 (DSS), 137 to 138 (AE), and R156 contribute to the S-adenosyl-L-methionine site.

Belongs to the methyltransferase superfamily. RNA methyltransferase RsmG family.

It is found in the cytoplasm. In terms of biological role, specifically methylates the N7 position of a guanine in 16S rRNA. This chain is Ribosomal RNA small subunit methyltransferase G, found in Prochlorococcus marinus (strain NATL2A).